The following is a 188-amino-acid chain: Segregation and condensation protein B (188 aa).

It belongs to the ScpB family. As to quaternary structure, homodimer. Homodimerization may be required to stabilize the binding of ScpA to the Smc head domains. Component of a cohesin-like complex composed of ScpA, ScpB and the Smc homodimer, in which ScpA and ScpB bind to the head domain of Smc. The presence of the three proteins is required for the association of the complex with DNA.

Its subcellular location is the cytoplasm. Functionally, participates in chromosomal partition during cell division. May act via the formation of a condensin-like complex containing Smc and ScpA that pull DNA away from mid-cell into both cell halves. This chain is Segregation and condensation protein B, found in Streptococcus gordonii (strain Challis / ATCC 35105 / BCRC 15272 / CH1 / DL1 / V288).